Reading from the N-terminus, the 492-residue chain is ATP synthase subunit beta, chloroplastic (492 aa).

170–177 contributes to the ATP binding site; the sequence is GGAGVGKT.

Belongs to the ATPase alpha/beta chains family. As to quaternary structure, F-type ATPases have 2 components, CF(1) - the catalytic core - and CF(0) - the membrane proton channel. CF(1) has five subunits: alpha(3), beta(3), gamma(1), delta(1), epsilon(1). CF(0) has four main subunits: a(1), b(1), b'(1) and c(9-12).

Its subcellular location is the plastid. The protein localises to the chloroplast thylakoid membrane. The catalysed reaction is ATP + H2O + 4 H(+)(in) = ADP + phosphate + 5 H(+)(out). Produces ATP from ADP in the presence of a proton gradient across the membrane. The catalytic sites are hosted primarily by the beta subunits. The polypeptide is ATP synthase subunit beta, chloroplastic (Pinus thunbergii (Japanese black pine)).